The chain runs to 561 residues: Tetracenomycin A2 monooxygenase-dioxygenase (561 aa).

Positions 15, 35, 128, and 152 each coordinate FAD. Tyr231 serves as the catalytic Proton acceptor. Residue Asp322 participates in FAD binding.

Belongs to the PheA/TfdB FAD monooxygenase family. Monomer. May form oligomers up to homohexamers. FAD serves as cofactor.

It carries out the reaction tetracenomycin A2 + 2 NADPH + 2 O2 + 2 H(+) = tetracenomycin C + 2 NADP(+) + H2O. It participates in antibiotic biosynthesis; tetracenomycin C biosynthesis. Involved in the biosynthesis of tetracenomycin C (TCM C). Catalyzes the triple hydroxylation of tetracenomycin A2 (TCM A2) at positions C-4, C-4a and C-12a to give tetracenomycin C (TCM C). Can use either NADH or NADPH as electron donors, but prefers NADPH under physiological conditions. The chain is Tetracenomycin A2 monooxygenase-dioxygenase from Streptomyces glaucescens.